The sequence spans 404 residues: Triose phosphate/phosphate translocator, chloroplastic (404 aa).

A chloroplast-targeting transit peptide spans 1–74 (MESRVLSRTT…GPVCSRREKT (74 aa)). The Chloroplast intermembrane portion of the chain corresponds to 75-98 (AVQPCRAASGSSGEAKTGFLEKYP). Residues 99–119 (ALVTGSFFFMWYFLNVIFNIL) form a helical membrane-spanning segment. The Lumenal segment spans residues 120–131 (NKKIYNYFPYPY). A helical membrane pass occupies residues 132 to 152 (FVSVIHLFVGVVYCLASWSVG). Residues 153-209 (LPKRAPMDSKLLKLLIPVAVCHAIGHVTSNVSFAAVAVSFTHTIKALEPFFNAAASQ) lie on the Chloroplast intermembrane side of the membrane. Residues 210–230 (FVLGQSIPITLWLSLAPVVIG) traverse the membrane as a helical segment. Residues 231 to 274 (VSMASLTELSFNWLGFISAMISNVSFTYRSLYSKKAMTDMDSTN) lie on the Lumenal side of the membrane. Residues 275 to 294 (IYAYISIIALFVCLPPAIIV) traverse the membrane as a helical segment. Topologically, residues 295–372 (EGPQLMKHGF…IAFGNKISTQ (78 aa)) are chloroplast intermembrane. Residues 373-393 (TAIGTSIAIAGVALYSLIKAK) traverse the membrane as a helical segment. At 394 to 404 (MEEEKRQMKST) the chain is on the lumenal side.

Belongs to the TPT transporter family. TPT (TC 2.A.7.9) subfamily. In terms of processing, the N-terminus is blocked.

The protein localises to the plastid. The protein resides in the chloroplast membrane. Mediates the export of fixed carbons from the chloroplasts into the cytosol in the form of triose phosphates. This is Triose phosphate/phosphate translocator, chloroplastic from Spinacia oleracea (Spinach).